Consider the following 511-residue polypeptide: Glucans biosynthesis protein G (511 aa).

The N-terminal stretch at 1–22 is a signal peptide; that stretch reads MMKMRWLSAAVMLTLYTSSSWA.

This sequence belongs to the OpgD/OpgG family.

The protein resides in the periplasm. The protein operates within glycan metabolism; osmoregulated periplasmic glucan (OPG) biosynthesis. Involved in the biosynthesis of osmoregulated periplasmic glucans (OPGs). The sequence is that of Glucans biosynthesis protein G from Escherichia coli (strain K12 / MC4100 / BW2952).